Reading from the N-terminus, the 912-residue chain is Protein translocase subunit SecA (912 aa).

ATP contacts are provided by residues Gln-87, 105–109 (GEGKT), and Asp-512. Zn(2+) is bound by residues Cys-896, Cys-898, Cys-907, and His-908.

Belongs to the SecA family. In terms of assembly, monomer and homodimer. Part of the essential Sec protein translocation apparatus which comprises SecA, SecYEG and auxiliary proteins SecDF-YajC and YidC. The cofactor is Zn(2+).

The protein resides in the cell inner membrane. It localises to the cytoplasm. It catalyses the reaction ATP + H2O + cellular proteinSide 1 = ADP + phosphate + cellular proteinSide 2.. Functionally, part of the Sec protein translocase complex. Interacts with the SecYEG preprotein conducting channel. Has a central role in coupling the hydrolysis of ATP to the transfer of proteins into and across the cell membrane, serving both as a receptor for the preprotein-SecB complex and as an ATP-driven molecular motor driving the stepwise translocation of polypeptide chains across the membrane. This chain is Protein translocase subunit SecA, found in Pseudomonas fluorescens (strain Pf0-1).